Reading from the N-terminus, the 91-residue chain is Large ribosomal subunit protein bL28 (91 aa).

This sequence belongs to the bacterial ribosomal protein bL28 family.

The chain is Large ribosomal subunit protein bL28 from Protochlamydia amoebophila (strain UWE25).